Here is a 158-residue protein sequence, read N- to C-terminus: Inorganic pyrophosphatase (158 aa).

E8 contributes to the Mg(2+) binding site. 3 residues coordinate substrate: K16, R30, and Y42. D52, D57, D84, and D89 together coordinate Mg(2+). D89 (proton acceptor) is an active-site residue. Y125 is a binding site for substrate.

This sequence belongs to the PPase family. Homohexamer. Mg(2+) serves as cofactor.

It is found in the cytoplasm. The enzyme catalyses diphosphate + H2O = 2 phosphate + H(+). Catalyzes the hydrolysis of inorganic pyrophosphate (PPi) forming two phosphate ions. This is Inorganic pyrophosphatase from Corynebacterium glutamicum (strain ATCC 13032 / DSM 20300 / JCM 1318 / BCRC 11384 / CCUG 27702 / LMG 3730 / NBRC 12168 / NCIMB 10025 / NRRL B-2784 / 534).